The primary structure comprises 293 residues: C-type lectin domain family 4 member G (293 aa).

Residues 1-31 (MDTTRYSKWGGSSEEVPGGPWGRWVHWSRRP) are Cytoplasmic-facing. Ser12 carries the post-translational modification Phosphoserine. A helical; Signal-anchor for type II membrane protein membrane pass occupies residues 32 to 52 (LFLALAVLVTTVLWAVILSIL). The Extracellular portion of the chain corresponds to 53–293 (LSKASTERAA…GWICEKRHNC (241 aa)). Asn73 carries an N-linked (GlcNAc...) asparagine glycan. The stretch at 96-136 (SGTQAQLQTTRAELGEAQAKLMEQESALRELRERVTQGLAE) forms a coiled coil. N-linked (GlcNAc...) asparagine glycosylation occurs at Asn159. A C-type lectin domain is found at 172 to 287 (FEGSCYFFSV…CDSEKDGWIC (116 aa)). Cysteines 264 and 278 form a disulfide.

(Microbial infection) Interacts with Japanese encephalitis virus envelope protein E. In terms of assembly, (Microbial infection) Interacts with ebolavirus glycoprotein. As to quaternary structure, (Microbial infection) Interacts with SARS-CoV spike glycoprotein. (Microbial infection) Interacts with lassa virus and Lymphocytic choriomeningitis virus glycoprotein. Expressed exclusively in fetal and adult liver and in lymph nodes. Specifically expressed by endothelial cells lining lymph node and liver sinuses (at protein level).

It is found in the cell membrane. Functionally, binds mannose, N-acetylglucosamine (GlcNAc) and fucose, but not galactose, in a Ca(2+)-dependent manner, in vitro. Its function is as follows. (Microbial infection) Acts as a receptor for Japanese encephalitis virus. In terms of biological role, (Microbial infection) Acts as a receptor for Ebolavirus. (Microbial infection) Acts as a receptor for SARS-CoV. Functionally, (Microbial infection) Acts as a receptor for Lassa virus and Lymphocytic choriomeningitis virus glycoprotein. This is C-type lectin domain family 4 member G (CLEC4G) from Homo sapiens (Human).